The following is a 138-amino-acid chain: Small ribosomal subunit protein uS11c (138 aa).

A disordered region spans residues 1–24 (MTKPIPRIGSRRNGRIGSRKSGRR). Residues 9 to 24 (GSRRNGRIGSRKSGRR) show a composition bias toward basic residues.

This sequence belongs to the universal ribosomal protein uS11 family. Part of the 30S ribosomal subunit.

The protein resides in the plastid. The protein localises to the chloroplast. The chain is Small ribosomal subunit protein uS11c from Liriodendron tulipifera (Tuliptree).